The primary structure comprises 625 residues: DNA-directed RNA polymerase subunit gamma (625 aa).

Zn(2+) contacts are provided by Cys-71, Cys-73, Cys-86, and Cys-89. Mg(2+)-binding residues include Asp-467, Asp-469, and Asp-471.

This sequence belongs to the RNA polymerase beta' chain family. RpoC1 subfamily. As to quaternary structure, in cyanobacteria the RNAP catalytic core is composed of 2 alpha, 1 beta, 1 beta', 1 gamma and 1 omega subunit. When a sigma factor is associated with the core the holoenzyme is formed, which can initiate transcription. Mg(2+) is required as a cofactor. Requires Zn(2+) as cofactor.

It carries out the reaction RNA(n) + a ribonucleoside 5'-triphosphate = RNA(n+1) + diphosphate. DNA-dependent RNA polymerase catalyzes the transcription of DNA into RNA using the four ribonucleoside triphosphates as substrates. The protein is DNA-directed RNA polymerase subunit gamma of Rippkaea orientalis (strain PCC 8801 / RF-1) (Cyanothece sp. (strain PCC 8801)).